We begin with the raw amino-acid sequence, 278 residues long: Gap junction delta-3 protein (278 aa).

At 1–24 the chain is on the cytoplasmic side; the sequence is MGEWAFLGSLLDAVQLQSPLVGRL. A helical transmembrane segment spans residues 25–45; that stretch reads WLVIMLIFRILVLATVGGAVF. Residues 46 to 76 lie on the Extracellular side of the membrane; that stretch reads EDEQEEFVCNTLQPGCRQTCYDRAFPVSHYR. The helical transmembrane segment at 77–97 threads the bilayer; it reads FWLFHILLLSAPPVLFVIYSM. The Cytoplasmic portion of the chain corresponds to 98–136; the sequence is HQASKEAGGAQLAPPCARGRAEAPCSPCALRARRARRCY. Residues 137–157 traverse the membrane as a helical segment; the sequence is LLSVALRLLAELAFLGGQALL. The Extracellular portion of the chain corresponds to 158-188; it reads YGFRVDPHYACAGPPCPHTVDCFVSRPTEKT. The chain crosses the membrane as a helical span at residues 189 to 209; that stretch reads VFVVFYFAVGLLSALLSVAEL. The Cytoplasmic portion of the chain corresponds to 210–278; sequence GHLLWKGRQR…LATVRQDLAI (69 aa). The segment at 223–278 is disordered; the sequence is LPPPPPSPSLPSQRGDPDPFGPPAYAHRSPAGDSEGEGGSGHSKASLATVRQDLAI.

It belongs to the connexin family. Delta-type subfamily. In terms of assembly, a connexon is composed of a hexamer of connexins.

The protein localises to the cell membrane. It localises to the cell junction. Its subcellular location is the gap junction. In terms of biological role, one gap junction consists of a cluster of closely packed pairs of transmembrane channels, the connexons, through which materials of low MW diffuse from one cell to a neighboring cell. This Mus musculus (Mouse) protein is Gap junction delta-3 protein (Gjd3).